The following is a 151-amino-acid chain: UPF0178 protein YaiI (151 aa).

Belongs to the UPF0178 family.

The polypeptide is UPF0178 protein YaiI (Salmonella agona (strain SL483)).